A 1023-amino-acid chain; its full sequence is MFHLRTCAAKLRPLTASQTVKTFSQNRPAAARTFQQIRCYSAPVAAEPFLSGTSSNYVEEMYCAWLENPKSVHKSWDIFFRNTNAGAPPGTAYQSPLPLSRGSLAAVAHAQSLVEAQPNVDKLVEDHLAVQSLIRAYQIRGHHVAQLDPLGILDADLDSSVPADIISSTDKLGFYGLDESDLDKVFHLPTTTFIGGQESALPLREIIRRLEMAYCQHIGVEFMFINDLEQCQWIRQKFETPGIMQFTNEEKRTLLARLVRSTRFEEFLQRKWSSEKRFGLEGCEVLIPALKTIIDKSSENGVDYVIMGMPHRGRLNVLANVIRKELEQIFCQFDSKLEAADEGSGDVKYHLGMYHRRINRVTDRNITLSLVANPSHLEAADPVVMGKTKAEQFYCGDTEGKKVMSILLHGDAAFAGQGIVYETFHLSDLPSYTTHGTVHVVVNNQIGFTTDPRMARSSPYPTDVARVVNAPIFHVNSDDPEAVMYVCKVAAEWRSTFHKDVVVDLVCYRRNGHNEMDEPMFTQPLMYKQIRKQKPVLQKYAELLVSQGVVNQPEYEEEISKYDKICEEAFARSKDEKILHIKHWLDSPWPGFFTLDGQPRSMSCPSTGLTEDILTHIGNVASSVPVENFTIHGGLSRILKTRGEMVKNRTVDWALAEYMAFGSLLKEGIHIRLSGQDVERGTFSHRHHVLHDQNVDKRTCIPMNHLWPNQAPYTVCNSSLSEYGVLGFELGFAMASPNALVLWEAQFGDFHNTAQCIIDQFICPGQAKWVRQNGIVLLLPHGMEGMGPEHSSARPERFLQMCNDDPDVLPDLKEANFDINQLYDCNWVVVNCSTPGNFFHVLRRQILLPFRKPLIIFTPKSLLRHPEARSSFDEMLPGTHFQRVIPEDGPAAQNPENVKRLLFCTGKVYYDLTRERKARDMVGQVAITRIEQLSPFPFDLLLKEVQKYPNAELAWCQEEHKNQGYYDYVKPRLRTTISRAKPVWYAGRDPAAAPATGNKKTHLTELQRLLDTAFDLDVFKNFS.

Residues 1-40 (MFHLRTCAAKLRPLTASQTVKTFSQNRPAAARTFQQIRCY) constitute a mitochondrion transit peptide. Residue K74 is modified to N6-succinyllysine. S100 is modified (phosphoserine). Residues H143, D156, and D158 each coordinate Ca(2+). R312 contributes to the thiamine diphosphate binding site. K401 is subject to N6-acetyllysine. Thiamine diphosphate contacts are provided by D411, N444, and I446. Mg(2+) is bound by residues D411, N444, and I446. K534 participates in a covalent cross-link: Glycyl lysine isopeptide (Lys-Gly) (interchain with G-Cter in ubiquitin). N6-succinyllysine is present on K564. Q676 contacts thiamine diphosphate. K970 carries the N6-acetyllysine modification.

This sequence belongs to the alpha-ketoglutarate dehydrogenase family. As to quaternary structure, homodimer. The 2-oxoglutarate dehydrogenase complex is composed of OGDH (2-oxoglutarate dehydrogenase; E1), DLST (dihydrolipoamide succinyltransferase; E2), DLD (dihydrolipoamide dehydrogenase; E3), and the assembly factor KGD4. It contains multiple copies of the three enzymatic components (E1, E2 and E3). In the nucleus, the 2-oxoglutarate dehydrogenase complex associates with KAT2A. Interacts with ABHD11; this interaction maintains the functional lipoylation of the 2-oxoglutarate dehydrogenase complex. Thiamine diphosphate serves as cofactor. Mg(2+) is required as a cofactor.

The protein localises to the mitochondrion. The protein resides in the nucleus. It catalyses the reaction N(6)-[(R)-lipoyl]-L-lysyl-[protein] + 2-oxoglutarate + H(+) = N(6)-[(R)-S(8)-succinyldihydrolipoyl]-L-lysyl-[protein] + CO2. Its activity is regulated as follows. Calcium ions and ADP stimulate, whereas ATP and NADH reduce catalytic activity. In terms of biological role, 2-oxoglutarate dehydrogenase (E1o) component of the 2-oxoglutarate dehydrogenase complex (OGDHC). Participates in the first step, rate limiting for the overall conversion of 2-oxoglutarate to succinyl-CoA and CO(2) catalyzed by the whole OGDHC. Catalyzes the irreversible decarboxylation of 2-oxoglutarate (alpha-ketoglutarate) via the thiamine diphosphate (ThDP) cofactor and subsequent transfer of the decarboxylated acyl intermediate on an oxidized dihydrolipoyl group that is covalently amidated to the E2 enzyme (dihydrolipoyllysine-residue succinyltransferase or DLST). Plays a key role in the Krebs (citric acid) cycle, which is a common pathway for oxidation of fuel molecules, including carbohydrates, fatty acids, and amino acids. Can catalyze the decarboxylation of 2-oxoadipate in vitro, but at a much lower rate than 2-oxoglutarate. Mainly active in the mitochondrion. A fraction of the 2-oxoglutarate dehydrogenase complex also localizes in the nucleus and is required for lysine succinylation of histones: associates with KAT2A on chromatin and provides succinyl-CoA to histone succinyltransferase KAT2A. The chain is 2-oxoglutarate dehydrogenase complex component E1 from Homo sapiens (Human).